Here is a 344-residue protein sequence, read N- to C-terminus: S-adenosylmethionine:tRNA ribosyltransferase-isomerase (344 aa).

This sequence belongs to the QueA family. As to quaternary structure, monomer.

Its subcellular location is the cytoplasm. It catalyses the reaction 7-aminomethyl-7-carbaguanosine(34) in tRNA + S-adenosyl-L-methionine = epoxyqueuosine(34) in tRNA + adenine + L-methionine + 2 H(+). Its pathway is tRNA modification; tRNA-queuosine biosynthesis. Its function is as follows. Transfers and isomerizes the ribose moiety from AdoMet to the 7-aminomethyl group of 7-deazaguanine (preQ1-tRNA) to give epoxyqueuosine (oQ-tRNA). The polypeptide is S-adenosylmethionine:tRNA ribosyltransferase-isomerase (Thiobacillus denitrificans (strain ATCC 25259 / T1)).